Here is a 919-residue protein sequence, read N- to C-terminus: Periodic tryptophan protein 2 homolog (919 aa).

WD repeat units lie at residues 12 to 50, 53 to 93, 94 to 132, 142 to 181, and 186 to 225; these read GTVYRRGNLNFTCDGNSVISPVGNRVTVFDLKNNKSDTL, ATRY…LHHF, HFKGSVHSVSFSPDGRKFVVTKGNIAQMYHAPGKKREFN, GPYDETTCIDWTDDSRCFVVGSKDMSTWVFGAERWDNLIY, and GHKDAIVACFFESNSLDLYSLSQDGVLCMWQCDTPPEGLR. The disordered stretch occupies residues 238–267; that stretch reads QREEEEEEEEDQEGDRETTIRGKATPAEEE. A compositionally biased stretch (acidic residues) spans 240–251; the sequence is EEEEEEEEDQEG. Residues 252–267 are compositionally biased toward basic and acidic residues; that stretch reads DRETTIRGKATPAEEE. 9 WD repeats span residues 286–325, 328–368, 371–410, 413–452, 456–498, 499–538, 541–580, 603–642, and 700–740; these read GDFNNLTAAAFHKKSHLLVTGFASGIFHLHELPEFNLIHS, ISDQ…YVLK, GHFNSMVALAYSPDGQYIVTGGDDGKVKVWNTLSGFCFVT, EHSSGVTGVTFTATGYVVVTSSMDGTVRAFDLHRYRNFRT, PRPT…DVLS, GHEGPISGLCFNPMKSVLASASWDKTVRLWDMFDSWRTKE, ALTSDALAVTFRPDGAELAVATLNSQITFWDPENAVQTGS, AKGKAFTALCYSADGHSILAGGMSKFVCIYHVREQILMKR, and KPEI…DPFE. The segment at 882–919 is disordered; the sequence is TKRSLDPLGSEEEAEASEDDSLHLLGGGGRDSEEEMLA. Residues 890–900 show a composition bias toward acidic residues; it reads GSEEEAEASED. A phosphoserine mark is found at serine 898 and serine 902.

This sequence belongs to the WD repeat PWP2 family. As to quaternary structure, part of the small subunit (SSU) processome, composed of more than 70 proteins and the RNA chaperone small nucleolar RNA (snoRNA) U3.

The protein localises to the nucleus. It is found in the nucleolus. Functionally, part of the small subunit (SSU) processome, first precursor of the small eukaryotic ribosomal subunit. During the assembly of the SSU processome in the nucleolus, many ribosome biogenesis factors, an RNA chaperone and ribosomal proteins associate with the nascent pre-rRNA and work in concert to generate RNA folding, modifications, rearrangements and cleavage as well as targeted degradation of pre-ribosomal RNA by the RNA exosome. The chain is Periodic tryptophan protein 2 homolog from Homo sapiens (Human).